We begin with the raw amino-acid sequence, 98 residues long: C-C motif chemokine 19 (98 aa).

The first 21 residues, 1-21 (MALLLALSLLVLWTSPAPTLS), serve as a signal peptide directing secretion. 2 disulfides stabilise this stretch: cysteine 29-cysteine 55 and cysteine 30-cysteine 71.

Belongs to the intercrine beta (chemokine CC) family. Interacts with TNFAIP6 (via Link domain). Expressed at high levels in the lymph nodes, thymus and appendix. Intermediate levels seen in colon and trachea, while low levels found in spleen, small intestine, lung, kidney and stomach.

The protein localises to the secreted. Its function is as follows. May play a role not only in inflammatory and immunological responses but also in normal lymphocyte recirculation and homing. May play an important role in trafficking of T-cells in thymus, and T-cell and B-cell migration to secondary lymphoid organs. Binds to chemokine receptor CCR7. Recombinant CCL19 shows potent chemotactic activity for T-cells and B-cells but not for granulocytes and monocytes. Binds to atypical chemokine receptor ACKR4 and mediates the recruitment of beta-arrestin (ARRB1/2) to ACKR4. This Homo sapiens (Human) protein is C-C motif chemokine 19 (CCL19).